A 163-amino-acid chain; its full sequence is ECF RNA polymerase sigma factor SigM (163 aa).

A Polymerase core binding motif is present at residues 30-43 (DLLQETFMRAYIHI). The H-T-H motif DNA-binding region spans 127 to 146 (YKEASHIMNISEANFKSVLF).

This sequence belongs to the sigma-70 factor family. ECF subfamily. As to quaternary structure, interacts with the N-terminus of YhdL, which is probably its anti-sigma factor. Interacts transiently with the RNAP core.

Its function is as follows. Sigma factors are initiation factors that promote the attachment of RNA polymerase (RNAP) to specific initiation sites and are then released. Extracytoplasmic function (ECF) sigma factors are held in an inactive form by a cognate anti-sigma factor (YhdL) until released. This sigma factor is involved in the maintenance of membrane and cell wall integrity in response to environmental stresses including salt, acid, ethanol and antibiotics stress. Partially regulates transcription from a number of genes including disA. Associates with RNAP core under all growth phases. This chain is ECF RNA polymerase sigma factor SigM (sigM), found in Bacillus subtilis (strain 168).